Consider the following 160-residue polypeptide: 6,7-dimethyl-8-ribityllumazine synthase (160 aa).

5-amino-6-(D-ribitylamino)uracil contacts are provided by residues Phe-22, Thr-57–Glu-59, and Thr-81–Ile-83. Gln-86 to Thr-87 serves as a coordination point for (2S)-2-hydroxy-3-oxobutyl phosphate. The active-site Proton donor is the His-89. Leu-114 serves as a coordination point for 5-amino-6-(D-ribitylamino)uracil. A (2S)-2-hydroxy-3-oxobutyl phosphate-binding site is contributed by Arg-128.

The protein belongs to the DMRL synthase family. Forms an icosahedral capsid composed of 60 subunits, arranged as a dodecamer of pentamers.

It carries out the reaction (2S)-2-hydroxy-3-oxobutyl phosphate + 5-amino-6-(D-ribitylamino)uracil = 6,7-dimethyl-8-(1-D-ribityl)lumazine + phosphate + 2 H2O + H(+). The protein operates within cofactor biosynthesis; riboflavin biosynthesis; riboflavin from 2-hydroxy-3-oxobutyl phosphate and 5-amino-6-(D-ribitylamino)uracil: step 1/2. Its function is as follows. Catalyzes the formation of 6,7-dimethyl-8-ribityllumazine by condensation of 5-amino-6-(D-ribitylamino)uracil with 3,4-dihydroxy-2-butanone 4-phosphate. This is the penultimate step in the biosynthesis of riboflavin. The chain is 6,7-dimethyl-8-ribityllumazine synthase from Buchnera aphidicola subsp. Acyrthosiphon pisum (strain Tuc7).